A 265-amino-acid chain; its full sequence is Hydroxyethylthiazole kinase 2 (265 aa).

Met-39 is a binding site for substrate. ATP contacts are provided by Lys-115 and Thr-168. Gly-195 serves as a coordination point for substrate.

It belongs to the Thz kinase family. Mg(2+) serves as cofactor.

It carries out the reaction 5-(2-hydroxyethyl)-4-methylthiazole + ATP = 4-methyl-5-(2-phosphooxyethyl)-thiazole + ADP + H(+). It functions in the pathway cofactor biosynthesis; thiamine diphosphate biosynthesis; 4-methyl-5-(2-phosphoethyl)-thiazole from 5-(2-hydroxyethyl)-4-methylthiazole: step 1/1. Its function is as follows. Catalyzes the phosphorylation of the hydroxyl group of 4-methyl-5-beta-hydroxyethylthiazole (THZ). The chain is Hydroxyethylthiazole kinase 2 from Clostridium botulinum (strain 657 / Type Ba4).